A 601-amino-acid chain; its full sequence is Oligoendopeptidase F, plasmid (601 aa).

His-387 is a binding site for Zn(2+). Glu-388 is an active-site residue. Zn(2+)-binding residues include His-391 and His-394.

It belongs to the peptidase M3B family. Requires Zn(2+) as cofactor.

Hydrolyzes peptides containing between 7 and 17 amino acids with a rather wide specificity. The polypeptide is Oligoendopeptidase F, plasmid (pepF1) (Lactococcus lactis subsp. cremoris (Streptococcus cremoris)).